Here is a 1018-residue protein sequence, read N- to C-terminus: Putative type I restriction enzyme MjaVIIIP endonuclease subunit (1018 aa).

This sequence belongs to the HsdR family. As to quaternary structure, the type I restriction/modification system is composed of three polypeptides R, M and S.

The catalysed reaction is Endonucleolytic cleavage of DNA to give random double-stranded fragments with terminal 5'-phosphates, ATP is simultaneously hydrolyzed.. Functionally, the restriction (R) subunit of a type I restriction enzyme that recognizes 5'-GAYN(5)GTAA-3' and cleaves a random distance away. The R subunit is required for both endonuclease and ATPase activities but not for modification. After locating a non-methylated recognition site, the enzyme complex serves as a molecular motor that translocates DNA in an ATP-dependent manner until a collision occurs that triggers cleavage. This chain is Putative type I restriction enzyme MjaVIIIP endonuclease subunit, found in Methanocaldococcus jannaschii (strain ATCC 43067 / DSM 2661 / JAL-1 / JCM 10045 / NBRC 100440) (Methanococcus jannaschii).